We begin with the raw amino-acid sequence, 533 residues long: Beta-1,4 N-acetylgalactosaminyltransferase 1 (533 aa).

At 1-7 (MWLGRRA) the chain is on the cytoplasmic side. A helical; Signal-anchor for type II membrane protein transmembrane segment spans residues 8–25 (LCALVLLLACASLGLLYA). Topologically, residues 26–533 (STRDAPGLRL…KHRLQCMTSQ (508 aa)) are lumenal. Asn79, Asn179, and Asn274 each carry an N-linked (GlcNAc...) asparagine glycan. The cysteines at positions 429 and 476 are disulfide-linked.

The protein belongs to the glycosyltransferase 2 family. Homodimer; disulfide-linked.

The protein resides in the golgi apparatus membrane. It carries out the reaction a ganglioside GM3 (d18:1(4E)) + UDP-N-acetyl-alpha-D-galactosamine = a ganglioside GM2 (d18:1(4E)) + UDP + H(+). The enzyme catalyses a ganglioside GM3 + UDP-N-acetyl-alpha-D-galactosamine = a ganglioside GM2 + UDP + H(+). It catalyses the reaction a ganglioside GD3 + UDP-N-acetyl-alpha-D-galactosamine = a ganglioside GD2 + UDP + H(+). The catalysed reaction is a ganglioside GD3 (d18:1(4E)) + UDP-N-acetyl-alpha-D-galactosamine = a ganglioside GD2 (d18:1(4E)) + UDP + H(+). It carries out the reaction a beta-D-Gal-(1-&gt;4)-beta-D-Glc-(1&lt;-&gt;1)-Cer(d18:1(4E)) + UDP-N-acetyl-alpha-D-galactosamine = a ganglioside GA2 (d18:1(4E)) + UDP + H(+). The enzyme catalyses a ganglioside GD1a + UDP-N-acetyl-alpha-D-galactosamine = a ganglioside GalNAc-GD1a + UDP + H(+). It catalyses the reaction a ganglioside GT3 (d18:1(4E)) + UDP-N-acetyl-alpha-D-galactosamine = a ganglioside GT2 (d18:1(4E)) + UDP + H(+). The catalysed reaction is a beta-D-galactosyl-(1-&gt;4)-beta-D-glucosyl-(1&lt;-&gt;1)-ceramide + UDP-N-acetyl-alpha-D-galactosamine = a ganglioside GA2 + UDP + H(+). It carries out the reaction a neolactoside IV(3)-alpha-NeuGc-nLc4Cer + UDP-N-acetyl-alpha-D-galactosamine = a neolactoside IV(4)-beta-GalNAc-IV(3)-alpha-NeuGc-nLc4Cer + UDP + H(+). It functions in the pathway sphingolipid metabolism. Its function is as follows. Involved in the biosynthesis of gangliosides GM2, GD2, GT2 and GA2 from GM3, GD3, GT3 and GA3, respectively. This is Beta-1,4 N-acetylgalactosaminyltransferase 1 from Homo sapiens (Human).